A 292-amino-acid chain; its full sequence is 4-diphosphocytidyl-2-C-methyl-D-erythritol kinase (292 aa).

Residue Lys-10 is part of the active site. Residue Pro-100 to Ser-110 participates in ATP binding. Asp-142 is a catalytic residue.

This sequence belongs to the GHMP kinase family. IspE subfamily. Homodimer.

It catalyses the reaction 4-CDP-2-C-methyl-D-erythritol + ATP = 4-CDP-2-C-methyl-D-erythritol 2-phosphate + ADP + H(+). It participates in isoprenoid biosynthesis; isopentenyl diphosphate biosynthesis via DXP pathway; isopentenyl diphosphate from 1-deoxy-D-xylulose 5-phosphate: step 3/6. Its function is as follows. Catalyzes the phosphorylation of the position 2 hydroxy group of 4-diphosphocytidyl-2C-methyl-D-erythritol. In Buchnera aphidicola subsp. Schizaphis graminum (strain Sg), this protein is 4-diphosphocytidyl-2-C-methyl-D-erythritol kinase.